Reading from the N-terminus, the 57-residue chain is Large ribosomal subunit protein bL32 (57 aa).

The protein belongs to the bacterial ribosomal protein bL32 family.

The protein is Large ribosomal subunit protein bL32 of Bacillus pumilus (strain SAFR-032).